A 436-amino-acid chain; its full sequence is UPF0597 protein YhaM (436 aa).

It belongs to the UPF0597 family.

In Shigella dysenteriae serotype 1 (strain Sd197), this protein is UPF0597 protein YhaM.